The primary structure comprises 256 residues: Alcohol dehydrogenase (256 aa).

12-35 (FVAGLGGIGLDTSKELVKRDLKNL) lines the NAD(+) pocket. Serine 140 is a binding site for substrate. The active-site Proton acceptor is the tyrosine 153.

It belongs to the short-chain dehydrogenases/reductases (SDR) family. Homodimer.

It carries out the reaction a primary alcohol + NAD(+) = an aldehyde + NADH + H(+). It catalyses the reaction a secondary alcohol + NAD(+) = a ketone + NADH + H(+). The chain is Alcohol dehydrogenase (Adh) from Drosophila tsacasi (Fruit fly).